The following is a 142-amino-acid chain: Transcription antitermination protein NusB (142 aa).

Belongs to the NusB family.

In terms of biological role, involved in transcription antitermination. Required for transcription of ribosomal RNA (rRNA) genes. Binds specifically to the boxA antiterminator sequence of the ribosomal RNA (rrn) operons. The chain is Transcription antitermination protein NusB from Streptococcus uberis (strain ATCC BAA-854 / 0140J).